The primary structure comprises 537 residues: Polyadenylate-binding protein 6 (537 aa).

4 consecutive RRM domains span residues 21 to 99 (GSLY…WSQR), 112 to 188 (ANLY…KFIN), 202 to 279 (TNVY…KALK), and 304 to 381 (SNLY…VAER). Residues 503–537 (KATTSEENRKEERRLTLSGKLSPEVKVEESGKQLQ) form a disordered region. Basic and acidic residues-rich tracts occupy residues 506-517 (TSEENRKEERRL) and 525-537 (PEVK…KQLQ).

This sequence belongs to the polyadenylate-binding protein type-1 family. Expressed at low levels in leaves and young seedlings.

The protein resides in the cytoplasm. The protein localises to the nucleus. Binds the poly(A) tail of mRNA. Appears to be an important mediator of the multiple roles of the poly(A) tail in mRNA biogenesis, stability and translation. This is Polyadenylate-binding protein 6 (PAB6) from Arabidopsis thaliana (Mouse-ear cress).